A 118-amino-acid chain; its full sequence is MARVKGGLGAKKRHNRTLKLAKGYRGARSKQYRVAKQSVMRALTSSYAGRKERKRQFRQLWIARINAAARLNGLSYSQFMHGLKLANVDLNRKVLADMAVTDAAGFAKLVEVAKSKLA.

The protein belongs to the bacterial ribosomal protein bL20 family.

Functionally, binds directly to 23S ribosomal RNA and is necessary for the in vitro assembly process of the 50S ribosomal subunit. It is not involved in the protein synthesizing functions of that subunit. In Agathobacter rectalis (strain ATCC 33656 / DSM 3377 / JCM 17463 / KCTC 5835 / VPI 0990) (Eubacterium rectale), this protein is Large ribosomal subunit protein bL20.